The sequence spans 181 residues: Large ribosomal subunit protein uL5 (181 aa).

This sequence belongs to the universal ribosomal protein uL5 family. Part of the 50S ribosomal subunit; contacts the 5S rRNA and probably tRNA. Forms a bridge to the 30S subunit in the 70S ribosome.

This is one of the proteins that bind and probably mediate the attachment of the 5S RNA into the large ribosomal subunit, where it forms part of the central protuberance. In the 70S ribosome it contacts protein S13 of the 30S subunit (bridge B1b), connecting the 2 subunits; this bridge is implicated in subunit movement. May contact the P site tRNA; the 5S rRNA and some of its associated proteins might help stabilize positioning of ribosome-bound tRNAs. The protein is Large ribosomal subunit protein uL5 of Methanococcus maripaludis (strain C6 / ATCC BAA-1332).